The chain runs to 265 residues: Probable cell division protein kinase ECU08_0230 (265 aa).

A Protein kinase domain is found at 4 to 263 (YILGALIGSG…IMEILENEYG (260 aa)). Residues 10–18 (IGSGTYGEV) and Lys-33 contribute to the ATP site. The Proton acceptor role is filled by Asp-121.

Belongs to the protein kinase superfamily. CMGC Ser/Thr protein kinase family. CDC2/CDKX subfamily.

Its subcellular location is the nucleus. It catalyses the reaction L-seryl-[protein] + ATP = O-phospho-L-seryl-[protein] + ADP + H(+). The enzyme catalyses L-threonyl-[protein] + ATP = O-phospho-L-threonyl-[protein] + ADP + H(+). Its function is as follows. May play a role in the control of the eukaryotic cell cycle. This chain is Probable cell division protein kinase ECU08_0230, found in Encephalitozoon cuniculi (strain GB-M1) (Microsporidian parasite).